The chain runs to 64 residues: Alpha-like toxin Lqh6 (64 aa).

The LCN-type CS-alpha/beta domain occupies 2–63; that stretch reads RDGYIAQPEN…GIIVDGVKCH (62 aa). 4 disulfides stabilise this stretch: Cys-12–Cys-62, Cys-16–Cys-34, Cys-20–Cys-44, and Cys-24–Cys-46. Lys-64 bears the Lysine amide mark.

It belongs to the long (4 C-C) scorpion toxin superfamily. Sodium channel inhibitor family. Alpha subfamily. Expressed by the venom gland.

Its subcellular location is the secreted. Functionally, alpha toxins bind voltage-independently at site-3 of sodium channels (Nav) and inhibit the inactivation of the activated channels, thereby blocking neuronal transmission. This toxin is highly toxic to insects and mice, and inhibits the binding of alpha-toxin to cockroach neuronal membranes. This Leiurus hebraeus (Hebrew deathstalker scorpion) protein is Alpha-like toxin Lqh6.